A 102-amino-acid chain; its full sequence is Defensin-like protein 285 (102 aa).

The first 28 residues, Met1 to Ala28, serve as a signal peptide directing secretion. 4 cysteine pairs are disulfide-bonded: Cys39–Cys100, Cys64–Cys83, Cys70–Cys88, and Cys75–Cys90.

Belongs to the DEFL family.

It localises to the secreted. In Arabidopsis thaliana (Mouse-ear cress), this protein is Defensin-like protein 285.